The following is a 247-amino-acid chain: PF03932 family protein CutC (247 aa).

A compositionally biased stretch (polar residues) spans 205–222; sequence KSTRPSLMESNSSAQMGS. Residues 205–226 form a disordered region; sequence KSTRPSLMESNSSAQMGSNDVD.

Belongs to the CutC family.

The protein localises to the cytoplasm. This is PF03932 family protein CutC from Vibrio atlanticus (strain LGP32) (Vibrio splendidus (strain Mel32)).